The chain runs to 223 residues: GTP cyclohydrolase 1 (223 aa).

Positions 111, 114, and 182 each coordinate Zn(2+).

This sequence belongs to the GTP cyclohydrolase I family. As to quaternary structure, homomer.

The catalysed reaction is GTP + H2O = 7,8-dihydroneopterin 3'-triphosphate + formate + H(+). It functions in the pathway cofactor biosynthesis; 7,8-dihydroneopterin triphosphate biosynthesis; 7,8-dihydroneopterin triphosphate from GTP: step 1/1. This Flavobacterium johnsoniae (strain ATCC 17061 / DSM 2064 / JCM 8514 / BCRC 14874 / CCUG 350202 / NBRC 14942 / NCIMB 11054 / UW101) (Cytophaga johnsonae) protein is GTP cyclohydrolase 1.